The sequence spans 159 residues: Transmembrane protein 89 (159 aa).

The signal sequence occupies residues 1 to 24; the sequence is MLHVLASLPLLLLLVTSASTHAWS. The Extracellular portion of the chain corresponds to 25-63; it reads RPLWYQVGLDLQPWGCQPKSVEGCRGGLSCPGYWLGPGA. Residues 64–86 traverse the membrane as a helical segment; that stretch reads SRIYPVAAVMITTTMLMICRKIL. At 87–159 the chain is on the cytoplasmic side; the sequence is QGRRRSQATK…QIKGTSTQSG (73 aa). The interval 91–110 is disordered; sequence RSQATKGEHPQVTTEPCGPW.

It is found in the membrane. This is Transmembrane protein 89 (TMEM89) from Homo sapiens (Human).